Reading from the N-terminus, the 479-residue chain is Dihydrolipoyl dehydrogenase, mitochondrial (479 aa).

Residues 1-19 constitute a mitochondrion transit peptide; it reads FNRXSPGLQGVSSVPLRTY. At lysine 50 the chain carries N6-acetyllysine; alternate. Lysine 50 is subject to N6-succinyllysine; alternate. FAD contacts are provided by residues 55-64 and lysine 73; that span reads EKNETLGGTC. Cysteines 64 and 69 form a disulfide. Residues lysine 88, lysine 106, lysine 116, and lysine 127 each carry the N6-acetyllysine; alternate modification. 4 positions are modified to N6-succinyllysine; alternate: lysine 88, lysine 106, lysine 116, and lysine 127. Glycine 138 contributes to the FAD binding site. 2 positions are modified to N6-succinyllysine: lysine 143 and lysine 150. 167–169 contacts FAD; the sequence is TGS. NAD(+) contacts are provided by residues 204–211 and glutamate 227; that span reads GAGVIGVE. N6-succinyllysine is present on residues lysine 257 and lysine 261. Valine 262 lines the NAD(+) pocket. Serine 269 carries the post-translational modification Phosphoserine. Residue glycine 298 participates in NAD(+) binding. An N6-acetyllysine modification is found at lysine 330. Residues aspartate 339 and 345–348 contribute to the FAD site; that span reads MLAH. Position 394 is an N6-acetyllysine; alternate (lysine 394). Lysine 394 carries the N6-succinyllysine; alternate modification. N6-acetyllysine occurs at positions 401 and 404. At lysine 414 the chain carries N6-succinyllysine. The active-site Proton acceptor is histidine 471.

The protein belongs to the class-I pyridine nucleotide-disulfide oxidoreductase family. In terms of assembly, homodimer. Part of the multimeric pyruvate dehydrogenase complex that contains multiple copies of pyruvate dehydrogenase (subunits PDHA (PDHA1 or PDHA2) and PDHB, E1), dihydrolipoamide acetyltransferase (DLAT, E2) and lipoamide dehydrogenase (DLD, E3). These subunits are bound to an inner core composed of about 48 DLAT and 12 PDHX molecules (by non covalent bonds). The 2-oxoglutarate dehydrogenase complex is composed of OGDH (2-oxoglutarate dehydrogenase; E1), DLST (dihydrolipoamide succinyltransferase; E2) and DLD (dihydrolipoamide dehydrogenase; E3). It contains multiple copies of the three enzymatic components (E1, E2 and E3). In the nucleus, the 2-oxoglutarate dehydrogenase complex associates with KAT2A. Interacts with PDHX. It depends on FAD as a cofactor. Post-translationally, tyrosine phosphorylated. As to expression, expressed in testis (at protein level).

Its subcellular location is the mitochondrion matrix. The protein resides in the nucleus. It localises to the cell projection. It is found in the cilium. The protein localises to the flagellum. Its subcellular location is the cytoplasmic vesicle. The protein resides in the secretory vesicle. It localises to the acrosome. The enzyme catalyses N(6)-[(R)-dihydrolipoyl]-L-lysyl-[protein] + NAD(+) = N(6)-[(R)-lipoyl]-L-lysyl-[protein] + NADH + H(+). Functionally, lipoamide dehydrogenase is a component of the glycine cleavage system as well as an E3 component of three alpha-ketoacid dehydrogenase complexes (pyruvate-, alpha-ketoglutarate-, and branched-chain amino acid-dehydrogenase complex). The 2-oxoglutarate dehydrogenase complex is mainly active in the mitochondrion. A fraction of the 2-oxoglutarate dehydrogenase complex also localizes in the nucleus and is required for lysine succinylation of histones: associates with KAT2A on chromatin and provides succinyl-CoA to histone succinyltransferase KAT2A. In monomeric form may have additional moonlighting function as serine protease. Involved in the hyperactivation of spermatazoa during capacitation and in the spermatazoal acrosome reaction. The protein is Dihydrolipoyl dehydrogenase, mitochondrial (DLD) of Mesocricetus auratus (Golden hamster).